Consider the following 497-residue polypeptide: MGLEALVPLAVIVTIFLLLVDLMHRRQRWAARYPPGPLPLPGLGNLLHVDFQNTPYCFDQLRRRFGDVFSLQLAWTPVVVLNGLAAVREALVTHGEDTADRPPVPITQILGFGPRSQGVFLARYGPAWREQRRFSVSTLRNLGLGKKSLEQWVTEEAACLCAAFANHSGRPFRPNGLLDKAVSNVIASLTCGRRFEYDDPRFLRLLDLAQEGLKEESGFLREVLNAVPVLLHIPALAGKVLRFQKAFLTQLDELLTEHRMTWDPAQPPRDLTEAFLAEMEKAKGNPESSFNDENLRIVVADLFSAGMVTTSTTLAWGLLLMILHPDVQRRVQQEIDDVIGQVRRPEMGDQARMPYTTAVIHEVQRFGDIVPLGVTHMTSRDIEVQGFRIPKGTTLFTNLSSVLKDEAVWEKPFRFHPEHFLDAQGHFVKPEAFLPFSAGRRACLGEPLARMELFLFFTSLLQHFSFSVPTGQPRPSHHGVFAFLVTPSPYELCAVPR.

Residue Asp-301 coordinates substrate. Cys-443 serves as a coordination point for heme.

Belongs to the cytochrome P450 family. Heme is required as a cofactor.

Its subcellular location is the endoplasmic reticulum membrane. The protein resides in the microsome membrane. The catalysed reaction is (5Z,8Z,11Z,14Z)-eicosatetraenoate + reduced [NADPH--hemoprotein reductase] + O2 = (8R,9S)-epoxy-(5Z,11Z,14Z)-eicosatrienoate + oxidized [NADPH--hemoprotein reductase] + H2O + H(+). The enzyme catalyses (5Z,8Z,11Z,14Z)-eicosatetraenoate + reduced [NADPH--hemoprotein reductase] + O2 = (11R,12S)-epoxy-(5Z,8Z,14Z)-eicosatrienoate + oxidized [NADPH--hemoprotein reductase] + H2O + H(+). It carries out the reaction (5Z,8Z,11Z,14Z)-eicosatetraenoate + reduced [NADPH--hemoprotein reductase] + O2 = (14S,15R)-epoxy-(5Z,8Z,11Z)-eicosatrienoate + oxidized [NADPH--hemoprotein reductase] + H2O + H(+). It catalyses the reaction N-(5Z,8Z,11Z,14Z-eicosatetraenoyl)-ethanolamine + reduced [NADPH--hemoprotein reductase] + O2 = N-(8,9-epoxy-5Z,11Z,14Z-eicosatrienoyl)-ethanolamine + oxidized [NADPH--hemoprotein reductase] + H2O + H(+). The catalysed reaction is N-(5Z,8Z,11Z,14Z-eicosatetraenoyl)-ethanolamine + reduced [NADPH--hemoprotein reductase] + O2 = N-(11,12-epoxy-5Z,8Z,14Z-eicosatrienoyl)-ethanolamine + oxidized [NADPH--hemoprotein reductase] + H2O + H(+). The enzyme catalyses N-(5Z,8Z,11Z,14Z-eicosatetraenoyl)-ethanolamine + reduced [NADPH--hemoprotein reductase] + O2 = N-(14,15-epoxy-5Z,8Z,11Z-eicosatrienoyl)-ethanolamine + oxidized [NADPH--hemoprotein reductase] + H2O + H(+). It carries out the reaction N-(5Z,8Z,11Z,14Z-eicosatetraenoyl)-ethanolamine + reduced [NADPH--hemoprotein reductase] + O2 = N-(20-hydroxy-5Z,8Z,11Z,14Z-eicosatetraenoyl)-ethanolamine + oxidized [NADPH--hemoprotein reductase] + H2O + H(+). It catalyses the reaction (5Z,8Z,11Z,14Z,17Z)-eicosapentaenoate + reduced [NADPH--hemoprotein reductase] + O2 = (17S,18R)-epoxy-(5Z,8Z,11Z,14Z)-eicosatetraenoate + oxidized [NADPH--hemoprotein reductase] + H2O + H(+). The catalysed reaction is (4Z,7Z,10Z,13Z,16Z,19Z)-docosahexaenoate + reduced [NADPH--hemoprotein reductase] + O2 = (19R,20S)-epoxy-(4Z,7Z,10Z,13Z,16Z)-docosapentaenoate + oxidized [NADPH--hemoprotein reductase] + H2O + H(+). The enzyme catalyses (4Z,7Z,10Z,13Z,16Z,19Z)-docosahexaenoate + reduced [NADPH--hemoprotein reductase] + O2 = (19S,20R)-epoxy-(4Z,7Z,10Z,13Z,16Z)-docosapentaenoate + oxidized [NADPH--hemoprotein reductase] + H2O + H(+). It carries out the reaction cholesterol + reduced [NADPH--hemoprotein reductase] + O2 = 25-hydroxycholesterol + oxidized [NADPH--hemoprotein reductase] + H2O + H(+). It catalyses the reaction all-trans-retinol + reduced [NADPH--hemoprotein reductase] + O2 = all-trans-retinal + oxidized [NADPH--hemoprotein reductase] + 2 H2O + H(+). It functions in the pathway cofactor metabolism; retinol metabolism. The protein operates within lipid metabolism; fatty acid metabolism. Its pathway is steroid metabolism; cholesterol metabolism. Its function is as follows. A cytochrome P450 monooxygenase involved in the metabolism of fatty acids, steroids and retinoids. Mechanistically, uses molecular oxygen inserting one oxygen atom into a substrate, and reducing the second into a water molecule, with two electrons provided by NADPH via cytochrome P450 reductase (NADPH--hemoprotein reductase). Catalyzes the epoxidation of double bonds of polyunsaturated fatty acids (PUFA). Metabolizes endocannabinoid arachidonoylethanolamide (anandamide) to 20-hydroxyeicosatetraenoic acid ethanolamide (20-HETE-EA) and 8,9-, 11,12-, and 14,15-epoxyeicosatrienoic acid ethanolamides (EpETrE-EAs), potentially modulating endocannabinoid system signaling. Catalyzes the hydroxylation of carbon-hydrogen bonds. Metabolizes cholesterol toward 25-hydroxycholesterol, a physiological regulator of cellular cholesterol homeostasis. Catalyzes the oxidative transformations of all-trans retinol to all-trans retinal, a precursor for the active form all-trans-retinoic acid. Also involved in the oxidative metabolism of drugs such as antiarrhythmics, adrenoceptor antagonists, and tricyclic antidepressants. The protein is Cytochrome P450 2D6 (CYP2D6) of Pan paniscus (Pygmy chimpanzee).